A 1039-amino-acid polypeptide reads, in one-letter code: Kinesin-like protein KIN-5B (1039 aa).

The region spanning 48-390 is the Kinesin motor domain; that stretch reads NVQVILRCKP…LDYAYRAKNI (343 aa). 134 to 141 provides a ligand contact to ATP; it reads GQTGTGKT. Positions 1008–1039 are disordered; the sequence is TLSEEHTSLEKISTKQGLGEANNRTPFLEVNK. Basic and acidic residues predominate over residues 1010–1020; sequence SEEHTSLEKIS.

This sequence belongs to the TRAFAC class myosin-kinesin ATPase superfamily. Kinesin family. KIN-5/BimC subfamily.

Its subcellular location is the cytoplasm. The protein resides in the cytoskeleton. The protein localises to the spindle. Its function is as follows. Responsible for microtubule translocation. May be important for the organization of phragmoplast-specific arrays of microtubules. Plays an essential role in stabilizing the mitotic spindle. Required during mitotic cytokinesis. This is Kinesin-like protein KIN-5B from Arabidopsis thaliana (Mouse-ear cress).